Here is a 1046-residue protein sequence, read N- to C-terminus: UDP-N-acetylglucosamine--peptide N-acetylglucosaminyltransferase 110 kDa subunit (1046 aa).

Ala-2 is subject to N-acetylalanine. Residues Ser-3 and Ser-4 each carry the phosphoserine; by GSK3-beta; alternate modification. 2 O-linked (GlcNAc) serine; alternate glycosylation sites follow: Ser-3 and Ser-4. Ser-20 is subject to Phosphoserine. TPR repeat units lie at residues 21–54 (FQGLAELAHREYQAGDFEAAERHCMQLWRQEPDN), 89–122 (AEAYSNLGNVYKERGQLQEAIEHYRHALRLKPDF), 123–156 (IDGYINLAAALVAAGDMEGAVQAYVSALQYNPDL), 157–190 (YCVRSDLGNLLKALGRLEEAKACYLKAIETQPNF), 191–224 (AVAWSNLGCVFNAQGEIWLAIHHFEKAVTLDPNF), 225–258 (LDAYINLGNVLKEARIFDRAVAAYLRALSLSPNH), 259–292 (AVVHGNLACVYYEQGLIDLAIDTYRRAIELQPHF), 293–326 (PDAYCNLANALKEKGSVAEAEDCYNTALRLCPTH), 327–360 (ADSLNNLANIKREQGNIEEAVRLYRKALEVFPEF), 361–394 (AAAHSNLASVLQQQGKLQEALMHYKEAIRISPTF), 395–428 (ADAYSNMGNTLKEMQDVQGALQCYTRAIQINPAF), and 429–462 (ADAHSNLASIHKDSGNIPEAIASYRTALKLKPDF). O-linked (GlcNAc) serine; by autocatalysis glycosylation occurs at Ser-399. Phosphothreonine is present on Thr-454. Residues 463 to 473 (PDAYCNLAHCL) form a TPR 13; truncated repeat. A DFP motif motif is present at residues 464–466 (DAY). Residues 487 to 503 (KKLVSIVADQLEKNRLP) carry the Nuclear localization signal motif. Catalysis depends on His-508, which acts as the Proton acceptor. Residues Gln-849, Lys-852, 906-908 (APK), 911-914 (HVRR), 930-932 (HTT), and Asp-935 each bind UDP. The residue at position 989 (Tyr-989) is a Phosphotyrosine. Positions 991 to 1010 (KKIRGKVWKQRISSPLFNTK) are required for phosphatidylinositol 3,4,5-triphosphate binding.

It belongs to the glycosyltransferase 41 family. O-GlcNAc transferase subfamily. Monomer; may exist in different oligomerization states in cells. Homotrimer, oligomerizes via TPR repeats 6 and 7. Trimerization is not necessary for activity in vitro, however it increases affinity for UDP-GlcNAc. Component of a THAP1/THAP3-HCFC1-OGT complex. Component of the NSL complex at least composed of MOF/KAT8, KANSL1, KANSL2, KANSL3, MCRS1, PHF20, OGT1/OGT, WDR5 and HCFC1. Found in a complex with KIF5B, RHOT1, RHOT2 and TRAK1. Found in a complex composed of at least SINHCAF, SIN3A, HDAC1, SAP30, RBBP4, OGT and TET1. Component of a complex composed of KMT2E/MLL5, OGT and USP7; the complex stabilizes KMT2E/MLL5, preventing KMT2E/MLL5 ubiquitination and proteasomal-mediated degradation. Interacts (via TPRs 1-6) with SIN3A; the interaction mediates transcriptional repression in parallel with histone deacetylase. Interacts (via TPR 5-6) with TET1, TET2 and TET3. Interacts (via TPR repeats 6 and 7) with ATXN10. Interacts with NSD2. Interacts with PROSER1; this interaction mediates TET2 O-GlcNAcylation and stability by promoting the interaction between OGT and TET2. Post-translationally, ubiquitinated by the SCF(FBXO31) complex, leading to its proteasomal degradation. In terms of processing, phosphorylation on Ser-3 or Ser-4 by GSK3-beta positively regulates its activity. Phosphorylation at Thr-454 by AMPK promotes nuclear localization. Glycosylated via autocatalysis; O-GlcNAcylation at Ser-399 promotes nuclear localization.

The protein localises to the nucleus. It is found in the cytoplasm. It carries out the reaction L-seryl-[protein] + UDP-N-acetyl-alpha-D-glucosamine = 3-O-(N-acetyl-beta-D-glucosaminyl)-L-seryl-[protein] + UDP + H(+). The catalysed reaction is L-threonyl-[protein] + UDP-N-acetyl-alpha-D-glucosamine = 3-O-(N-acetyl-beta-D-glucosaminyl)-L-threonyl-[protein] + UDP + H(+). Its pathway is protein modification; protein glycosylation. Its activity is regulated as follows. Inhibited by UDP. Functionally, catalyzes the transfer of a single N-acetylglucosamine from UDP-GlcNAc to a serine or threonine residue in cytoplasmic and nuclear proteins resulting in their modification with a beta-linked N-acetylglucosamine (O-GlcNAc). Glycosylates a large and diverse number of proteins including histone H2B, AKT1, AMPK, ATG4B, CAPRIN1, EZH2, FNIP1, GSDMD, KRT7, LMNA, LMNB1, LMNB2, RPTOR, HOXA1, PFKL, KMT2E/MLL5, MAPT/TAU, TET2, RBL2, RET, NOD2 and HCFC1. Can regulate their cellular processes via cross-talk between glycosylation and phosphorylation or by affecting proteolytic processing. Involved in insulin resistance in muscle and adipocyte cells via glycosylating insulin signaling components and inhibiting the 'Thr-308' phosphorylation of AKT1, enhancing IRS1 phosphorylation and attenuating insulin signaling. Involved in glycolysis regulation by mediating glycosylation of 6-phosphofructokinase PFKL, inhibiting its activity. Plays a key role in chromatin structure by mediating O-GlcNAcylation of 'Ser-112' of histone H2B: recruited to CpG-rich transcription start sites of active genes via its interaction with TET proteins (TET1, TET2 or TET3). As part of the NSL complex indirectly involved in acetylation of nucleosomal histone H4 on several lysine residues. O-GlcNAcylation of 'Ser-75' of EZH2 increases its stability, and facilitating the formation of H3K27me3 by the PRC2/EED-EZH2 complex. Stabilizes KMT2E/MLL5 by mediating its glycosylation, thereby preventing KMT2E/MLL5 ubiquitination. Regulates circadian oscillation of the clock genes and glucose homeostasis in the liver. Stabilizes clock proteins BMAL1 and CLOCK through O-glycosylation, which prevents their ubiquitination and subsequent degradation. Promotes the CLOCK-BMAL1-mediated transcription of genes in the negative loop of the circadian clock such as PER1/2 and CRY1/2. O-glycosylates HCFC1 and regulates its proteolytic processing and transcriptional activity. Component of a THAP1/THAP3-HCFC1-OGT complex that is required for the regulation of the transcriptional activity of RRM1. Regulates mitochondrial motility in neurons by mediating glycosylation of TRAK1. Promotes autophagy by mediating O-glycosylation of ATG4B. Acts as a regulator of mTORC1 signaling by mediating O-glycosylation of RPTOR and FNIP1: O-GlcNAcylation of RPTOR in response to glucose sufficiency promotes activation of the mTORC1 complex. Its function is as follows. Catalyzes the transfer of a single N-acetylglucosamine from UDP-GlcNAc to a serine or threonine residue. Acts on cytoplasmic and nuclear proteins resulting in their modification with a beta-linked N-acetylglucosamine (O-GlcNAc). Glycosylates a large and diverse number of proteins including histone H2B, AKT1, ATG4B, EZH2, PFKL, KMT2E/MLL5, MAPT/TAU, NOD2 and HCFC1. Can regulate their cellular processes via cross-talk between glycosylation and phosphorylation or by affecting proteolytic processing. Probably by glycosylating KMT2E/MLL5, stabilizes KMT2E/MLL5 by preventing its ubiquitination. Involved in insulin resistance in muscle and adipocyte cells via glycosylating insulin signaling components and inhibiting the 'Thr-308' phosphorylation of AKT1, enhancing IRS1 phosphorylation and attenuating insulin signaling. Involved in glycolysis regulation by mediating glycosylation of 6-phosphofructokinase PFKL, inhibiting its activity. Component of a THAP1/THAP3-HCFC1-OGT complex that is required for the regulation of the transcriptional activity of RRM1. Plays a key role in chromatin structure by mediating O-GlcNAcylation of 'Ser-112' of histone H2B: recruited to CpG-rich transcription start sites of active genes via its interaction with TET proteins (TET1, TET2 or TET3). As part of the NSL complex indirectly involved in acetylation of nucleosomal histone H4 on several lysine residues. O-GlcNAcylation of 'Ser-75' of EZH2 increases its stability, and facilitating the formation of H3K27me3 by the PRC2/EED-EZH2 complex. Regulates circadian oscillation of the clock genes and glucose homeostasis in the liver. Stabilizes clock proteins BMAL1 and CLOCK through O-glycosylation, which prevents their ubiquitination and subsequent degradation. Promotes the CLOCK-BMAL1-mediated transcription of genes in the negative loop of the circadian clock such as PER1/2 and CRY1/2. O-glycosylates HCFC1 and regulates its proteolytic processing and transcriptional activity. Regulates mitochondrial motility in neurons by mediating glycosylation of TRAK1. Glycosylates HOXA1. O-glycosylates FNIP1. Promotes autophagy by mediating O-glycosylation of ATG4B. The chain is UDP-N-acetylglucosamine--peptide N-acetylglucosaminyltransferase 110 kDa subunit (OGT) from Oryctolagus cuniculus (Rabbit).